Here is a 355-residue protein sequence, read N- to C-terminus: Elongation factor Ts (355 aa).

The involved in Mg(2+) ion dislocation from EF-Tu stretch occupies residues Thr-82–Val-85.

Belongs to the EF-Ts family.

The protein localises to the cytoplasm. In terms of biological role, associates with the EF-Tu.GDP complex and induces the exchange of GDP to GTP. It remains bound to the aminoacyl-tRNA.EF-Tu.GTP complex up to the GTP hydrolysis stage on the ribosome. This Helicobacter hepaticus (strain ATCC 51449 / 3B1) protein is Elongation factor Ts.